The chain runs to 688 residues: MARKYPLDKFRNFGIMAHIDAGKTTTTERILFYTGINHKIGETHDGASTMDWMVQEQERGITITSAATTCAWKEHELNIIDTPGHVDFTVEVERSLRVLDGAVTVLDAKSGVEPQTETVWRQADKYGVPRMIYVNKMDATGADFFRCISTVRDRLKGNAVPIQIPIGSEENFQGMIDLIRNVAILFYDDLGKDMREEAIPAEYAEKAEEYRAAMIEAIAEADEELMMKYLEGEEITEEELKAGLRKATIANEIYPCICGSSYKNKGVQQMIDGVVDYLPSPLDIPAVKGTNLEGEEAERNAADGEPLSALAFKIATDPFVGKLAYTRIYSGIMESGSYVLNSTKGKKERIGRLVKMHSNSRQEVESLEAGELGAVIGLKNTGTGDTLCSEKDPIILESMEFPEPVISVAIEPKTKAAQEKMGMALAKLAEEDPTFKTWTNEETGQTIIAGMGELHLDIIVDRLKREFKVECNVGAPQVAYKETIRKAVKAEAKYAKQSGGKGQYGHAVIEMEPTEGEYVFENAIVGGAIPREYIPAVDNGIQEASLNGIIAGYNVINFKVRLVHGSYHEVDSSEMAFKIAGSMAFKNAMAKADPVLLEPVEKVEITVPEEYMGDVIGDVNSRRGRMEGMEEVSGAQVIRAFVPLSEMFGYATSLRSRTQGRGVYSMVFDHYEEVPKSIQEEVAGNKTK.

One can recognise a tr-type G domain in the interval 8–282; sequence DKFRNFGIMA…GVVDYLPSPL (275 aa). GTP-binding positions include 17–24, 81–85, and 135–138; these read AHIDAGKT, DTPGH, and NKMD.

This sequence belongs to the TRAFAC class translation factor GTPase superfamily. Classic translation factor GTPase family. EF-G/EF-2 subfamily.

Its subcellular location is the cytoplasm. Catalyzes the GTP-dependent ribosomal translocation step during translation elongation. During this step, the ribosome changes from the pre-translocational (PRE) to the post-translocational (POST) state as the newly formed A-site-bound peptidyl-tRNA and P-site-bound deacylated tRNA move to the P and E sites, respectively. Catalyzes the coordinated movement of the two tRNA molecules, the mRNA and conformational changes in the ribosome. This Clostridium botulinum (strain Eklund 17B / Type B) protein is Elongation factor G.